The primary structure comprises 204 residues: Protease (204 aa).

Catalysis depends on residues histidine 53, aspartate 70, and cysteine 121.

Belongs to the peptidase C5 family. Interacts with protease cofactor pVI-C; this interaction is necessary for protease activation.

The protein resides in the virion. The protein localises to the host nucleus. It catalyses the reaction Cleaves proteins of the adenovirus and its host cell at two consensus sites: -Yaa-Xaa-Gly-Gly-|-Xaa- and -Yaa-Xaa-Gly-Xaa-|-Gly- (in which Yaa is Met, Ile or Leu, and Xaa is any amino acid).. Requires DNA and protease cofactor for maximal activation. Inside nascent virions, becomes partially activated by binding to the viral DNA, allowing it to cleave the cofactor that binds to the protease and fully activates it. Actin, like the viral protease cofactor, seems to act as a cofactor in the cleavage of cytokeratin 18 and of actin itself. Cleaves viral precursor proteins (pTP, pIIIa, pVI, pVII, pVIII, and pX) inside newly assembled particles giving rise to mature virions. Protease complexed to its cofactor slides along the viral DNA to specifically locate and cleave the viral precursors. Mature virions have a weakened organization compared to the unmature virions, thereby facilitating subsequent uncoating. Without maturation, the particle lacks infectivity and is unable to uncoat. Late in adenovirus infection, in the cytoplasm, may participate in the cytoskeleton destruction. Cleaves host cell cytoskeletal keratins K7 and K18. The chain is Protease from Porcine adenovirus A serotype 3 (PAdV-3).